The primary structure comprises 128 residues: Large ribosomal subunit protein bL20 (128 aa).

This sequence belongs to the bacterial ribosomal protein bL20 family.

In terms of biological role, binds directly to 23S ribosomal RNA and is necessary for the in vitro assembly process of the 50S ribosomal subunit. It is not involved in the protein synthesizing functions of that subunit. This chain is Large ribosomal subunit protein bL20, found in Anaplasma marginale (strain Florida).